The chain runs to 227 residues: Ribose-5-phosphate isomerase A (227 aa).

Residues 26-29 (TGST), 82-85 (DGAD), and 95-98 (KGGG) contribute to the substrate site. Glu104 functions as the Proton acceptor in the catalytic mechanism. Position 122 (Lys122) interacts with substrate.

It belongs to the ribose 5-phosphate isomerase family. Homodimer.

The catalysed reaction is aldehydo-D-ribose 5-phosphate = D-ribulose 5-phosphate. It functions in the pathway carbohydrate degradation; pentose phosphate pathway; D-ribose 5-phosphate from D-ribulose 5-phosphate (non-oxidative stage): step 1/1. Its function is as follows. Catalyzes the reversible conversion of ribose-5-phosphate to ribulose 5-phosphate. This Streptococcus pneumoniae (strain Hungary19A-6) protein is Ribose-5-phosphate isomerase A.